Here is an 86-residue protein sequence, read N- to C-terminus: Small ribosomal subunit protein uS17 (86 aa).

It belongs to the universal ribosomal protein uS17 family. As to quaternary structure, part of the 30S ribosomal subunit.

Functionally, one of the primary rRNA binding proteins, it binds specifically to the 5'-end of 16S ribosomal RNA. The chain is Small ribosomal subunit protein uS17 from Streptococcus mutans serotype c (strain ATCC 700610 / UA159).